The primary structure comprises 205 residues: Octanoyltransferase (205 aa).

The region spanning 30–205 (ERTADEIWLL…QALRARLGYA (176 aa)) is the BPL/LPL catalytic domain. Residues 69-76 (RGGQVTYH), 136-138 (SLG), and 149-151 (GLA) each bind substrate. Cys167 functions as the Acyl-thioester intermediate in the catalytic mechanism.

This sequence belongs to the LipB family.

It is found in the cytoplasm. It carries out the reaction octanoyl-[ACP] + L-lysyl-[protein] = N(6)-octanoyl-L-lysyl-[protein] + holo-[ACP] + H(+). Its pathway is protein modification; protein lipoylation via endogenous pathway; protein N(6)-(lipoyl)lysine from octanoyl-[acyl-carrier-protein]: step 1/2. Catalyzes the transfer of endogenously produced octanoic acid from octanoyl-acyl-carrier-protein onto the lipoyl domains of lipoate-dependent enzymes. Lipoyl-ACP can also act as a substrate although octanoyl-ACP is likely to be the physiological substrate. This chain is Octanoyltransferase, found in Ectopseudomonas mendocina (strain ymp) (Pseudomonas mendocina).